Reading from the N-terminus, the 320-residue chain is Phosphoribosylaminoimidazole-succinocarboxamide synthase (320 aa).

The tract at residues 283 to 303 (ESDWDRNSPPPPLPESIAHQT) is disordered.

Belongs to the SAICAR synthetase family.

It carries out the reaction 5-amino-1-(5-phospho-D-ribosyl)imidazole-4-carboxylate + L-aspartate + ATP = (2S)-2-[5-amino-1-(5-phospho-beta-D-ribosyl)imidazole-4-carboxamido]succinate + ADP + phosphate + 2 H(+). It participates in purine metabolism; IMP biosynthesis via de novo pathway; 5-amino-1-(5-phospho-D-ribosyl)imidazole-4-carboxamide from 5-amino-1-(5-phospho-D-ribosyl)imidazole-4-carboxylate: step 1/2. The protein is Phosphoribosylaminoimidazole-succinocarboxamide synthase of Rhodopirellula baltica (strain DSM 10527 / NCIMB 13988 / SH1).